A 528-amino-acid chain; its full sequence is Probable GTP-binding protein OBGM, mitochondrial (528 aa).

Residues 1 to 45 constitute a mitochondrion transit peptide; the sequence is MWRRQHALLRRISLPKPPAATGIGCYYATEPEGRKPKTAPLQSRG. Positions 46–339 constitute an Obg domain; it reads MVDRFRLRAK…TYLILELKSI (294 aa). Disordered stretches follow at residues 52-87 and 167-212; these read LRAKGGDGGNGCISLRRSRSDRQGKPDGGNGGRGGD and HSPF…NHRG. Over residues 77-86 the composition is skewed to gly residues; that stretch reads PDGGNGGRGG. Basic and acidic residues predominate over residues 197–207; that stretch reads NTAENDCERGN. Positions 340 to 513 constitute an OBG-type G domain; the sequence is ADVGLVGMPN…LRVGLRDLMD (174 aa). GTP contacts are provided by residues 346 to 353 and 393 to 397; these read GMPNAGKS and DIPGL.

It belongs to the TRAFAC class OBG-HflX-like GTPase superfamily. OBG GTPase family.

It localises to the mitochondrion. Functionally, may bind GTP and have GTPase activity. The chain is Probable GTP-binding protein OBGM, mitochondrial (OBGM) from Oryza sativa subsp. japonica (Rice).